A 696-amino-acid polypeptide reads, in one-letter code: UvrABC system protein B (696 aa).

One can recognise a Helicase ATP-binding domain in the interval 46-433 (EGVEDGLSFQ…SGQTAEQVVR (388 aa)). 59–66 (GVTGSGKT) serves as a coordination point for ATP. The Beta-hairpin motif lies at 112 to 135 (YYDYYQPEAYVPQRDLFIEKDSSI). The region spanning 450–616 (QVDDVLSEIT…GVVKRIKDII (167 aa)) is the Helicase C-terminal domain. Residues 647-682 (AKEIKRLEKQMADYAKNLEFEKAAQTRDQLALLRER) form the UVR domain.

The protein belongs to the UvrB family. In terms of assembly, forms a heterotetramer with UvrA during the search for lesions. Interacts with UvrC in an incision complex.

It localises to the cytoplasm. The UvrABC repair system catalyzes the recognition and processing of DNA lesions. A damage recognition complex composed of 2 UvrA and 2 UvrB subunits scans DNA for abnormalities. Upon binding of the UvrA(2)B(2) complex to a putative damaged site, the DNA wraps around one UvrB monomer. DNA wrap is dependent on ATP binding by UvrB and probably causes local melting of the DNA helix, facilitating insertion of UvrB beta-hairpin between the DNA strands. Then UvrB probes one DNA strand for the presence of a lesion. If a lesion is found the UvrA subunits dissociate and the UvrB-DNA preincision complex is formed. This complex is subsequently bound by UvrC and the second UvrB is released. If no lesion is found, the DNA wraps around the other UvrB subunit that will check the other stand for damage. This chain is UvrABC system protein B, found in Burkholderia mallei (strain ATCC 23344).